The primary structure comprises 401 residues: Hemorrhagic metalloproteinase-disintegrin-like kaouthiagin (401 aa).

Residues 14–208 (KYIEFYVIVD…DRPQCILNKP (195 aa)) form the Peptidase M12B domain. 2 residues coordinate Ca(2+): glutamate 17 and aspartate 101. N-linked (GlcNAc...) asparagine glycosylation occurs at asparagine 112. Disulfide bonds link cysteine 125/cysteine 203, cysteine 164/cysteine 187, and cysteine 166/cysteine 171. Position 149 (histidine 149) interacts with Zn(2+). Glutamate 150 is an active-site residue. Zn(2+) is bound by residues histidine 153 and histidine 159. Residues cysteine 203, asparagine 206, isoleucine 218, asparagine 221, phenylalanine 223, glutamate 225, glutamate 228, and aspartate 231 each coordinate Ca(2+). The Disintegrin domain maps to 216-285 (PAICGNYFVE…ECPTDSLQRN (70 aa)). Cystine bridges form between cysteine 219-cysteine 248, cysteine 230-cysteine 243, cysteine 232-cysteine 238, cysteine 257-cysteine 277, cysteine 264-cysteine 296, cysteine 289-cysteine 301, cysteine 308-cysteine 358, cysteine 323-cysteine 366, cysteine 336-cysteine 346, cysteine 353-cysteine 389, and cysteine 383-cysteine 394. Residues 263–265 (DCD) carry the D/ECD-tripeptide motif. Ca(2+) is bound by residues aspartate 265, leucine 266, glutamate 268, and aspartate 280.

This sequence belongs to the venom metalloproteinase (M12B) family. P-III subfamily. P-IIIa sub-subfamily. As to quaternary structure, monomer. The cofactor is Zn(2+). In terms of tissue distribution, expressed by the venom gland.

The protein resides in the secreted. Its function is as follows. Snake venom zinc protease that inhibits hemostasis by binding and cleaving the vWF in humans. Also has and inhibitory effect on the collagen-induced platelet aggregation. The protein is Hemorrhagic metalloproteinase-disintegrin-like kaouthiagin of Naja kaouthia (Monocled cobra).